A 406-amino-acid chain; its full sequence is Protein phosphatase 2C (406 aa).

Residues 23–274 (RCGSNCVNGY…DNISCMIVQF (252 aa)) enclose the PPM-type phosphatase domain. Mn(2+) contacts are provided by Asp-55, Gly-56, Asp-221, and Asp-265.

This sequence belongs to the PP2C family. Monomer. It depends on Mg(2+) as a cofactor. Mn(2+) serves as cofactor.

It catalyses the reaction O-phospho-L-seryl-[protein] + H2O = L-seryl-[protein] + phosphate. The catalysed reaction is O-phospho-L-threonyl-[protein] + H2O = L-threonyl-[protein] + phosphate. In terms of biological role, enzyme with a broad specificity. The protein is Protein phosphatase 2C of Leishmania chagasi.